The following is a 148-amino-acid chain: Large ribosomal subunit protein bL9 (148 aa).

Belongs to the bacterial ribosomal protein bL9 family.

Functionally, binds to the 23S rRNA. This Syntrophotalea carbinolica (strain DSM 2380 / NBRC 103641 / GraBd1) (Pelobacter carbinolicus) protein is Large ribosomal subunit protein bL9.